A 426-amino-acid chain; its full sequence is MITGSEVYQVVEAMAPLYTAAALGYGSVRWLKAFSNEQCAGINHFVALYAVPVLIFDMVSTNNVYKMNGRLIAADTLQKAVLLLGLMAWALWERSRARGAGAKAKAAVSSPLQWVITCFSVASLPNTIIMGVPLLNGMYGPVSKDLMKQIVVMQFCIWYNVIIFLYEYMAARRSASAPPPASSEGSAKISPSSPVKAAAAAADTNGNAVAADRPQEVAVNIEITEMAASTARDGVSGETTAAAKEVSSGEVAPVEEEEASAPAPSMKHVIWMAVKKLLQIPNTYASFLGLIWSLIAFKCGFSMPKIVEDSLFTIRTTAVGLSMFSSGTFIARQSRFVPCGYKIASFSMVIKFLIGPVVMLFASLVIGMHGTLLHIAVVQAALPLAVTSFVYAEEYKVHADIMSTGVILGIFISLPVTIVYYILLGL.

At 1–6 (MITGSE) the chain is on the extracellular side. The chain crosses the membrane as a helical span at residues 7–27 (VYQVVEAMAPLYTAAALGYGS). The Cytoplasmic portion of the chain corresponds to 28-38 (VRWLKAFSNEQ). Residues 39-59 (CAGINHFVALYAVPVLIFDMV) form a helical membrane-spanning segment. Val-51 is a binding site for (indol-3-yl)acetate. Residues 60-70 (STNNVYKMNGR) are Extracellular-facing. A helical transmembrane segment spans residues 71 to 91 (LIAADTLQKAVLLLGLMAWAL). Residues 92-114 (WERSRARGAGAKAKAAVSSPLQW) lie on the Cytoplasmic side of the membrane. Residues 115 to 135 (VITCFSVASLPNTIIMGVPLL) form a helical membrane-spanning segment. 2 residues coordinate (indol-3-yl)acetate: Asn-126 and Ile-128. Residues 136 to 145 (NGMYGPVSKD) lie on the Extracellular side of the membrane. Residues 146 to 166 (LMKQIVVMQFCIWYNVIIFLY) traverse the membrane as a helical segment. Residue Tyr-159 participates in (indol-3-yl)acetate binding. Over 167-286 (EYMAARRSAS…LLQIPNTYAS (120 aa)) the chain is Cytoplasmic. The disordered stretch occupies residues 232-258 (RDGVSGETTAAAKEVSSGEVAPVEEEE). A helical transmembrane segment spans residues 287-307 (FLGLIWSLIAFKCGFSMPKIV). Topologically, residues 308 to 310 (EDS) are extracellular. Residues 311–331 (LFTIRTTAVGLSMFSSGTFIA) form a helical membrane-spanning segment. The Cytoplasmic segment spans residues 332–347 (RQSRFVPCGYKIASFS). The chain crosses the membrane as a helical span at residues 348–368 (MVIKFLIGPVVMLFASLVIGM). The Extracellular segment spans residues 369–371 (HGT). The helical transmembrane segment at 372-392 (LLHIAVVQAALPLAVTSFVYA) threads the bilayer. Val-386 contacts (indol-3-yl)acetate. Topologically, residues 393–405 (EEYKVHADIMSTG) are cytoplasmic. The helical transmembrane segment at 406 to 426 (VILGIFISLPVTIVYYILLGL) threads the bilayer.

This sequence belongs to the auxin efflux carrier (TC 2.A.69.1) family. Homodimer. As to expression, expressed in roots, leaves and shoot apex. Expressed in roots, stem bases, stems, leaves and young panicles.

The protein resides in the membrane. Its function is as follows. May act as a component of the auxin efflux carrier. The sequence is that of Probable auxin efflux carrier component 9 from Oryza sativa subsp. japonica (Rice).